A 2514-amino-acid chain; its full sequence is MNNLEIINLIDKGVAIVGVGFRIPSGNNENSICSPDDLFNNLKNGFDGVSSTSERWSDNFHKLGEISSPNAGLLPFNECKSFDPLFFGINPSDAHQIDPQQRLLLKCTWEALEDASIDPISIRGTNTSVFIGSSNIDYQHINKHQDSVLKNVIAQSAYAVSNRISYCFDFNGPSLSIDTACSSSLNAVSQGYHSILNGTSNMSIVGGVNLILDVGMIKAYSYLSMLSKTHGKCKAFDESGDGFTRGECATIVVLKNLQDAVKDGNRIYCVINGSSSNVDGGGHMDKVNLYSPSKQSQFNNINSAFKSTNGKLSINDIQYIEAHGTGTKTGDPIETEAISMAFKNRDKSTPILIGSIKSNIGHCEAGSGVASLIKCCLMFKYQCFLPNIHFKNPNPLIKFNEWNLKVVTSPIPFNKRINEKPVSMMINNFGVTGSNCCLLISEFKKQDYESYENNNNNKSNHKNILIPFSANSSNSLNQYQSKFKNIINNQFNFIDFTANQIYSKSNYLYQRSVVIASNSNELFEKILNKKQIQTKNSIISNMSFKGKNPITIFVFSGQGSQYPKMALELYNNDEIFKKSIDLIDSKLSKYYGYSVWGKLTTIKDDDLTSIHDPIFAQPALCMLSVSLFEIYCHWGVNPSFILGHSLGEISAAYCSGMIDLDTFCYTVYYRSIAQSKTNGCGRMLSINISDEEFKSMYSQKYPQIEIACYNSPQSIVVAGNESILNEISKELKEKEIFTAMLGSLSSFHTSSQQCTKDSILQLNIESNQPKVPIFSTVTTNLFNESNRFNSQYVYDNIIKPVKFTQTISNIYKHIESNQLNNDIVFIEIAPHPTISFYIKQMVPSSLNESVSVYSALHKKKNDVEEFQQTISNLYCQNGYSINFKCQLENKKSNQSINLPLYQWDDELYFAQTQTLEQYTKEGPPIDHLGLSNSYYSPFKNSYRTFIDINNKPFQYLKGHMVKGKYYFPGCGYIDIIIQLYKNQDIFISFIEFKTPLILIEGINQYLQTNIQQTGKSEYRAQFHFKDQKSNEWIQSSNANFQLLDHGNDIPSNYNIEEIIKNKCNLSKLTKNELYTQIKSKTGLNYTGVFQGATECYLGNDCSLSVLSLKSQTNSFLNIPILDTCLHGMLVLINDQSQIVFDKAIGFKYYSSNIPSDLKEYKDSIYVYSNLKPKNADSYHGSIIVMLSDGSVLYEIQEVIFKSLIPIKHSLKIEYPNDELYKVHLQSKDSQIPTPSSFKSIIYENDFFHSALNIPEDLFKYISTLFYKDIIKRCPEININKINSHSVNEIISSFSKISKNQRLFRFVFETIKENGILNSLEENDDAYFEFNELVIKSSKIISKLLFPLESDNDNEDLPQSLFQNGLMDKIYKCSYLRKKYQMISHVIIHSIKEIINNNIIIRILEFGGGTASLSVEVIGEIVALLQENPNYQVEIEYTWSDISPAFIADAKNKINKIINDAAITNGLNVIYRSLTIDESLLENQAIKPSYYDFVIMSNVLHVVKNIKQAVEQMYQLLTPNGQLLFIEPPYKSVLIDSIIGSFEQWWSFTDTDIRKDRCGMSQQSWYQLLKTCNFKDILMSKECIFVGSVIHAQKPPISLLNSQPKHDNIIIYGGGGNLSFVENIKLDSNSKSLIQIETIQEFNQLLSQSTITNDSIIYFIKTLETLSLDNYKQITLEYIEINQRLLQINSLCKHVLIVSDSRKTNYLASSVVGAARYFDEFQQLKLHTLDFDYDSTQNYINSKNNKMVQFINILVDSKTNVHKEMIIINNKVYYEIVQKEKNLKLKYNSESFENQNNLMCSLSPNLEYQLQSKQIKLRDNQVEVKTIATGINYKDYLNFSGSNNNNGDDNTGLPQFGYEFSGIITRVGNNVKDYKVGDNVFGLSNSCTSSHIVTNFKNIQLKPSNISHNEASSIPIDYLTSFMSLFNVGSLNIEDNESILIHLGSDSFGLSTFEILKWKGFKSNLFVTVDLDETKQYLLDRYGDFITGIYSNTDKSYVTEIKNELIKLGSKKKGVDLILNTLPSDFMDSNFELLTKSGRIIDLTSNHLNQSEFLKNINFKYNHGYHNFQLSLIQKNKIQKCLYEISHAIENGELKTIPIKEFTNLNIKDAIKYITNGNIEKITVSHDHEIYSDIIYRSLDEKEFSILKSNYQINSNNLGKNILITGQSGIILEILKWIIKYSNINTIENVIILSRSSLKWELELLINQTKLSNNNIKFHFKSVDVGDSEQVDNAINEILNENQQITNIDSIYHFAFQQITCKVQEINMKHLDISHGAKSMGAVNLHNQSIKRNWKLINFVMASSALSLIGSTDQCTYACANLLLDSFSKYRESLGLPSACINLGSIESTGFVSKNESISEFTDGIGYVPTPINLVLGLLDLQIQNAGKFTNSMLSNLISSKFKNIQQTSLFLKFDYLMNLNDNSEQTKKENIGNKNIDELFIEKVSELFSTDQSRINKNLRLIDYGADSLIIVQLKNWIDKEIGINLITIKQLQNNTINISIKMILNSLMKNNQI.

Residues 11-442 (DKGVAIVGVG…GSNCCLLISE (432 aa)) form the Ketosynthase family 3 (KS3) domain. Active-site for beta-ketoacyl synthase activity residues include cysteine 181, histidine 323, and histidine 362. The tract at residues 635–668 (GVNPSFILGHSLGEISAAYCSGMIDLDTFCYTVY) is acyl/malonyl transferase. Serine 645 functions as the For acyl/malonyl transferase activity in the catalytic mechanism. Positions 925-1047 (IDHLGLSNSY…ANFQLLDHGN (123 aa)) are N-terminal hotdog fold. Positions 925–1209 (IDHLGLSNSY…FKSLIPIKHS (285 aa)) constitute a PKS/mFAS DH domain. The active-site Proton acceptor; for dehydratase activity is the histidine 959. The segment at 1064–1209 (NLSKLTKNEL…FKSLIPIKHS (146 aa)) is C-terminal hotdog fold. Catalysis depends on aspartate 1122, which acts as the Proton donor; for dehydratase activity. A Carrier domain is found at 2431–2508 (IGNKNIDELF…ISIKMILNSL (78 aa)). Serine 2468 bears the O-(pantetheine 4'-phosphoryl)serine mark.

It depends on pantetheine 4'-phosphate as a cofactor.

Functionally, probable polyketide synthase. The protein is Probable polyketide synthase 8/35 (pks8) of Dictyostelium discoideum (Social amoeba).